A 346-amino-acid polypeptide reads, in one-letter code: uncharacterized protein (346 aa).

Belongs to the IIV-6 359L family.

This is an uncharacterized protein from Invertebrate iridescent virus 6 (IIV-6).